The chain runs to 292 residues: 2-(5''-triphosphoribosyl)-3'-dephosphocoenzyme-A synthase (292 aa).

Belongs to the CitG/MdcB family.

The enzyme catalyses 3'-dephospho-CoA + ATP = 2'-(5''-triphospho-alpha-D-ribosyl)-3'-dephospho-CoA + adenine. Its function is as follows. Catalyzes the formation of 2-(5''-triphosphoribosyl)-3'-dephosphocoenzyme-A, the precursor of the prosthetic group of the holo-acyl carrier protein (gamma chain) of citrate lyase, from ATP and dephospho-CoA. This Escherichia coli (strain UTI89 / UPEC) protein is 2-(5''-triphosphoribosyl)-3'-dephosphocoenzyme-A synthase.